Consider the following 280-residue polypeptide: Clathrin adapter accessory protein LAA2 (280 aa).

A disordered region spans residues 1–26 (MSDRDQIEPVTNALDAESDSSDDFGN). The short motif at 19–30 (DSSDDFGNFSDA) is the Ear-binding motif element.

Interacts with the clathrin-associated adapter complex AP-1. Interacts with LAA1.

The protein resides in the cytoplasmic vesicle. It is found in the clathrin-coated vesicle. Its function is as follows. Involved in localization of clathrin-associated adapter complex (AP-1) and subsequent AP-1-mediated clathrin-coated vesicle cargo loading. Directly mediates the interaction between LAA1 and AP-1 which is required for AP-1 localization. In complex with LAA1, cooperates with the small GTPase ARF1 and the phosphatidyl-inositol-4-phosphate (PI4P) synthesis to confer temporal specificity to AP-1 recruitment. The polypeptide is Clathrin adapter accessory protein LAA2 (Saccharomyces cerevisiae (strain ATCC 204508 / S288c) (Baker's yeast)).